Here is a 126-residue protein sequence, read N- to C-terminus: 13 kDa ribonucleoprotein-associated protein (126 aa).

It belongs to the eukaryotic ribosomal protein eL8 family. Component of the U3 snoRNP particle. Binds to the C'/D and B/C motifs in U3 snoRNA. Component of the 25S U4/U6.U5 tri-snRNP particle, a subcomplex of the spliceosome. Binds to the 5' stem-loop of U4 snRNA.

The protein localises to the nucleus. The protein resides in the nucleolus. Functionally, common component of the spliceosome and rRNA processing machinery. In association with the spliceosomal U4/U6.U5 tri-snRNP particle, required for splicing of pre-mRNA. In association with box C/D snoRNPs, required for processing of pre-ribosomal RNA (rRNA) and site-specific 2'-O-methylation of substrate RNAs. Essential for the accumulation and stability of U4 snRNA, U6 snRNA, and box C/D snoRNAs. In Mycosarcoma maydis (Corn smut fungus), this protein is 13 kDa ribonucleoprotein-associated protein (SNU13).